The following is a 522-amino-acid chain: Leucine-rich repeat transmembrane neuronal protein 1 (522 aa).

A signal peptide spans 1–34 (MDFLLLGLCLYWLLRRPSGVVLCLLGACFQMLPA). Residues 35 to 63 (APSGCPQLCRCEGRLLYCEALNPTEAPHN) enclose the LRRNT domain. Over 35–427 (APSGCPQLCR…HAENAVQIHK (393 aa)) the chain is Extracellular. A glycan (N-linked (GlcNAc...) asparagine) is linked at asparagine 63. LRR repeat units follow at residues 64 to 87 (LSGLLGLSLRYNSLSELRAGQFTG), 89 to 111 (MQLTWLYLDHNHICSVQGDAFQK), 112 to 135 (LRRVKELTLSSNQITQLPNTTFRP), 137 to 159 (PNLRSVDLSYNKLQALAPDLFHG), 161 to 183 (RKLTTLHMRANAIQFVPVRIFQD), 184 to 207 (CRSLKFLDIGYNQLKSLARNSFAG), 209 to 231 (FKLTELHLEHNDLVKVNFAHFPR), 233 to 255 (ISLHSLCLRRNKVAIVVSSLDWV), 256 to 278 (WNLKKMDLSGNEIEYMEPHVFET), and 279 to 302 (VPHLQSLQLDSNRLTYIEPRILNS). N-linked (GlcNAc...) asparagine glycosylation occurs at asparagine 130. The region spanning 314–365 (NLWDCGRNVCALASWLSNFQGRYDGNLQCASPEYAQGEDVLDAVYAFHLCED) is the LRRCT domain. N-linked (GlcNAc...) asparagine glycosylation is present at asparagine 380. The disordered stretch occupies residues 382–401 (SDLGPPASSATTLADGGEGQ). The chain crosses the membrane as a helical span at residues 428-448 (VVTGTMALIFSFLIVVLVLYV). The Cytoplasmic portion of the chain corresponds to 449–522 (SWKCFPASLR…HQQPARECEV (74 aa)).

The protein belongs to the LRRTM family.

The protein resides in the cell membrane. The protein localises to the postsynaptic cell membrane. Functionally, exhibits strong synaptogenic activity, restricted to excitatory presynaptic differentiation, acting at both pre- and postsynaptic level. This chain is Leucine-rich repeat transmembrane neuronal protein 1 (LRRTM1), found in Pongo abelii (Sumatran orangutan).